The primary structure comprises 632 residues: MFYPEHFDVIVIGGGHAGTEAAMAAARMGRQTLLLTHNIDTLGQMSCNPAIGGIGKGHLVKEIDAMGGLMATAIDHAGIQFRTLNASKGPAVRATRAQADRVLYRQAIRTTLENQPNLMIFQQPVEDLIVENDQVTGAVTRMGLKFRAKAVVLTVGTFLDGKIHIGLENYSGGRAGDPPSVSLSHRLRELPLRVGRLKTGTPPRIDARTIDFSQLAPQLGDNPMPVFSFLGNVDQHPEQMPCHITHTNEQTHEIIRNNLERSPMYAGVIEGIGPRYCPSIEDKVMRFADRNSHQIFLEPEGLTSNEIYPNGISTSLPFDVQMQIVNSMKGMENAKIIRPGYAIEYDFFDPRDLKQTLESKFINGLFFAGQINGTTGYEEAAAQGLLAGLNAARYAFDQEGWFPRRDQAYIGVLVDDLCTLGTKEPYRMFTSRAEYRLMLREDNADLRLTEIGRELGMVDDNRWAQFSEKVELVEKERQRLRDIWVHPKADNLEEINQLLKTPLSKEANGEDLLRRPEMTYEILKKIPRFAPGIDDSRPQAAEQVEIQVKYEGYINRQQEEIEKQLRNESAALPIDIDYKQVSGLSNEVIAKLNDHKPTSIGQASRISGVTPAAISILLVWLKKQGLLRRSAS.

Residues 13 to 18 (GGGHAG), V125, and S180 contribute to the FAD site. 273-287 (GPRYCPSIEDKVMRF) is an NAD(+) binding site. Q370 provides a ligand contact to FAD.

It belongs to the MnmG family. In terms of assembly, homodimer. Heterotetramer of two MnmE and two MnmG subunits. Requires FAD as cofactor.

It localises to the cytoplasm. NAD-binding protein involved in the addition of a carboxymethylaminomethyl (cmnm) group at the wobble position (U34) of certain tRNAs, forming tRNA-cmnm(5)s(2)U34. The polypeptide is tRNA uridine 5-carboxymethylaminomethyl modification enzyme MnmG (Proteus mirabilis (strain HI4320)).